The primary structure comprises 372 residues: MAKQYDSVECPFCDEVSKYEKLAKIGQGTFGEVFKARHRKTGQKVALKKVLMENEKEGFPITALREIKILQLLKHENVVNLIEICRTKASPYNRCKGSIYLVFDFCEHDLAGLLSNVLVKFTLSEIKRVMQMLLNGLYYIHRNKILHRDMKAANVLITRDGVLKLADFGLARAFSLAKNSQPNRYTNRVVTLWYRPPELLLGERDYGPPIDLWGAGCIMAEMWTRSPIMQGNTEQHQLALISQLCGSITPEVWPNVDNYELYEKLELVKGQKRKVKDRLKAYVRDPYALDLIDKLLVLDPAQRIDSDDALNHDFFWSDPMPSDLKGMLSTHLTSMFEYLAPPRRKGSQITQQSTNQSRNPATTNQTEFERVF.

Residues 19-315 (YEKLAKIGQG…SDDALNHDFF (297 aa)) form the Protein kinase domain. 25–33 (IGQGTFGEV) is a binding site for ATP. Residue K35 is modified to Phosphoserine. An N6-acetyllysine; by EP300/CBP, PCAF/KAT2B and GCN5/KAT2A modification is found at K44. K48 contacts ATP. Position 48 is an N6-acetyllysine; by PCAF/KAT2B and GCN5/KAT2A (K48). N54 is modified (phosphothreonine). 104 to 106 (DFC) is an ATP binding site. Catalysis depends on D149, which acts as the Proton acceptor. Positions 166–191 (ADFGLARAFSLAKNSQPNRYTNRVVT) are T-loop. Residue D167 coordinates ATP. S175 bears the Phosphoserine mark. T186 carries the phosphothreonine; by CaMK1D modification. A disordered region spans residues 343 to 372 (RRKGSQITQQSTNQSRNPATTNQTEFERVF). Phosphoserine; by CDK9 and PKA is present on S347. Residues 347 to 366 (SQITQQSTNQSRNPATTNQT) show a composition bias toward polar residues. T350 is subject to Phosphothreonine; by CDK9. The residue at position 353 (S353) is a Phosphoserine; by CDK9. The residue at position 354 (T354) is a Phosphothreonine; by CDK9. Phosphoserine; by CDK9 is present on S357. T362 and T363 each carry phosphothreonine; by CDK9.

It belongs to the protein kinase superfamily. CMGC Ser/Thr protein kinase family. CDC2/CDKX subfamily. In terms of assembly, component of the super elongation complex (SEC), at least composed of EAF1, EAF2, CDK9, MLLT3/AF9, AFF (AFF1 or AFF4), the P-TEFb complex and ELL (ELL, ELL2 or ELL3). Associates with CCNT1/cyclin-T1, CCNT2/cyclin-T2 (isoform A and isoform B) or CCNK/cyclin-K to form active P-TEFb. P-TEFb forms a complex with AFF4/AF5Q31 and is part of the super elongation complex (SEC). Component of a complex which is composed of at least 5 members: HTATSF1/Tat-SF1, P-TEFb complex, RNA pol II, SUPT5H and NCL/nucleolin. Associates with UBR5 and forms a transcription regulatory complex composed of CDK9, RNAP II, UBR5 and TFIIS/TCEA1 that can stimulate target gene transcription (e.g. gamma fibrinogen/FGG) by recruiting their promoters. Component of the 7SK snRNP inactive complex which is composed of at least 8 members: P-TEFb (composed of CDK9 and CCNT1/cyclin-T1), HEXIM1, HEXIM2, LARP7, BCDIN3, SART3 proteins and 7SK and U6 snRNAs. This inactive 7SK snRNP complex can also interact with NCOR1 and HDAC3, probably to regulate CDK9 acetylation. Release of P-TEFb from P-TEFb/7SK snRNP complex requires both PP2B to transduce calcium Ca(2+) signaling in response to stimuli (e.g. UV or hexamethylene bisacetamide (HMBA)) and PPP1CA to dephosphorylate Thr-186. This released P-TEFb remains inactive in the pre-initiation complex with BRD4 until new Thr-186 phosphorylation occurs after the synthesis of a short RNA. Interacts with BRD4; to target chromatin binding. Interacts with JMJD6. Interacts with activated nuclear STAT3 and RELA/p65. Binds to AR and MYOD1. Forms a complex composed of CDK9, CCNT1/cyclin-T1, EP300 and GATA4 that stimulates hypertrophy in cardiomyocytes. The large PER complex involved in the repression of transcriptional termination is composed of at least PER2, CDK9, DDX5, DHX9, NCBP1 and POLR2A. Interacts with HSF1. Interacts with TBX21. Isoform 3: binds to KU70/XRCC6. Interacts with WDR43. Interacts with ZMYND8; the association appears to occur between homodimeric ZMYND8 and the activated form of the P-TEFb complex. As to quaternary structure, (Microbial infection) Interacts with the acidic/proline-rich region of HIV-1 and HIV-2 Tat via T-loop region and is thus required for HIV to hijack host transcription machinery during its replication through cooperative binding to viral TAR RNA. (Microbial infection) Interacts with human herpes virus 1 (HHV-1) protein ICP22; this interaction blocks the recruitment of positive transcription elongation factor b (P-TEFb) to the viral promoter. Autophosphorylation at Thr-186, Ser-347, Thr-350, Ser-353, Thr-354 and Ser-357 triggers kinase activity by promoting cyclin and substrate binding (e.g. HIV TAT) upon conformational changes. Thr-186 phosphorylation requires the calcium Ca(2+) signaling pathway, including CaMK1D and calmodulin. This inhibition is relieved by Thr-29 dephosphorylation. However, phosphorylation at Thr-29 is inhibitory within the HIV transcription initiation complex. Phosphorylation at Ser-175 inhibits kinase activity. Can be phosphorylated on either Thr-362 or Thr-363 but not on both simultaneously. Post-translationally, dephosphorylation of Thr-186 by PPM1A and PPM1B blocks CDK9 activity and may lead to CDK9 proteasomal degradation. However, PPP1CA-mediated Thr-186 dephosphorylation is required to release P-TEFb from its inactive P-TEFb/7SK snRNP complex. Dephosphorylated at Ser-347 by the PNUTS-PP1 complex during RNA polymerase II transcription pause-release. Dephosphorylation of C-terminus Thr and Ser residues by protein phosphatase-1 (PP1) triggers CDK9 activity, contributing to the activation of HIV-1 transcription. In terms of processing, N6-acetylation of Lys-44 promotes kinase activity, whereas acetylation of both Lys-44 and Lys-48 mediated by PCAF/KAT2B and GCN5/KAT2A reduces kinase activity. The acetylated form associates with PML bodies in the nuclear matrix and with the transcriptionally silent HIV-1 genome; deacetylated upon transcription stimulation. Deacetylated by SIRT7, promoting the kinase activity and subsequent 'Ser-2' phosphorylation of the C-terminal domain (CTD) of RNA polymerase II. Polyubiquitinated and thus activated by UBR5. This ubiquitination is promoted by TFIIS/TCEA1 and favors 'Ser-2' phosphorylation of RPB1/POLR2A CTD. As to expression, ubiquitous.

The protein resides in the nucleus. The protein localises to the cytoplasm. It is found in the PML body. The catalysed reaction is L-seryl-[protein] + ATP = O-phospho-L-seryl-[protein] + ADP + H(+). It carries out the reaction L-threonyl-[protein] + ATP = O-phospho-L-threonyl-[protein] + ADP + H(+). The enzyme catalyses [DNA-directed RNA polymerase] + ATP = phospho-[DNA-directed RNA polymerase] + ADP + H(+). Inhibited by CDKI-71, CR8, GPC-286199, AG-024322, flavopiridol (alvocidib), RBG-286147, anilinopyrimidine 32, arylazopyrazole 31b, indirubin 3'-monoxime, meriolin 3,P276-00, olomoucine II, pyrazolotriazine, meriolin, variolin, thiazolyl-pyrimidine, thiazolyl-pyrimidine, indirubin-30-monoxime, ZK 304709, AG-012986, AT7519, R547, RGB-286638, imidazole pyrimidine, EXEL-3700, EXEL-8647, 5,6-dichloro-1-b-ribofur-anosyl-benzimidazole (DRB), P276-00, roscovitine (seliciclib, CYC202) and SNS-032 (BMS-387032). Activation by Thr-186 phosphorylation is calcium Ca(2+) signaling pathway-dependent; actively inactivated by dephosphorylation mediated by PPP1CA, PPM1A and PPM1B. Reversibly repressed by acetylation at Lys-44 and Lys-48. Protein kinase involved in the regulation of transcription. Member of the cyclin-dependent kinase pair (CDK9/cyclin-T) complex, also called positive transcription elongation factor b (P-TEFb), which facilitates the transition from abortive to productive elongation by phosphorylating the CTD (C-terminal domain) of the large subunit of RNA polymerase II (RNAP II) POLR2A, SUPT5H and RDBP. This complex is inactive when in the 7SK snRNP complex form. Phosphorylates EP300, MYOD1, RPB1/POLR2A and AR and the negative elongation factors DSIF and NELFE. Regulates cytokine inducible transcription networks by facilitating promoter recognition of target transcription factors (e.g. TNF-inducible RELA/p65 activation and IL-6-inducible STAT3 signaling). Promotes RNA synthesis in genetic programs for cell growth, differentiation and viral pathogenesis. P-TEFb is also involved in cotranscriptional histone modification, mRNA processing and mRNA export. Modulates a complex network of chromatin modifications including histone H2B monoubiquitination (H2Bub1), H3 lysine 4 trimethylation (H3K4me3) and H3K36me3; integrates phosphorylation during transcription with chromatin modifications to control co-transcriptional histone mRNA processing. The CDK9/cyclin-K complex has also a kinase activity towards CTD of RNAP II and can substitute for CDK9/cyclin-T P-TEFb in vitro. Replication stress response protein; the CDK9/cyclin-K complex is required for genome integrity maintenance, by promoting cell cycle recovery from replication arrest and limiting single-stranded DNA amount in response to replication stress, thus reducing the breakdown of stalled replication forks and avoiding DNA damage. In addition, probable function in DNA repair of isoform 2 via interaction with KU70/XRCC6. Promotes cardiac myocyte enlargement. RPB1/POLR2A phosphorylation on 'Ser-2' in CTD activates transcription. AR phosphorylation modulates AR transcription factor promoter selectivity and cell growth. DSIF and NELF phosphorylation promotes transcription by inhibiting their negative effect. The phosphorylation of MYOD1 enhances its transcriptional activity and thus promotes muscle differentiation. Catalyzes phosphorylation of KAT5, promoting KAT5 recruitment to chromatin and histone acetyltransferase activity. In Homo sapiens (Human), this protein is Cyclin-dependent kinase 9.